A 1106-amino-acid polypeptide reads, in one-letter code: Carbamoyl phosphate synthase large chain (1106 aa).

Positions 1 to 402 (MPKREDLKSV…ALQKALRSLE (402 aa)) are carboxyphosphate synthetic domain. ATP contacts are provided by Arg-129, Arg-169, Gly-175, Gly-176, Glu-208, Ile-210, Glu-215, Gly-241, Val-242, His-243, Gln-285, and Glu-299. The ATP-grasp 1 domain maps to 133–328 (KGVVERCGAE…IAKIATKLSL (196 aa)). Residues Gln-285, Glu-299, and Asn-301 each coordinate Mg(2+). Mn(2+)-binding residues include Gln-285, Glu-299, and Asn-301. The oligomerization domain stretch occupies residues 403-546 (QKGSQLDFGS…YHYSSYDQED (144 aa)). Positions 547-956 (EIALHEKPSV…AFAKSQAAAN (410 aa)) are carbamoyl phosphate synthetic domain. The 192-residue stretch at 677-868 (ARVLDIAGLI…LAKAAALIGT (192 aa)) folds into the ATP-grasp 2 domain. Positions 713, 752, 754, 759, 784, 785, 786, 787, 827, and 839 each coordinate ATP. Gln-827, Glu-839, and Asn-841 together coordinate Mg(2+). The Mn(2+) site is built by Gln-827, Glu-839, and Asn-841. An MGS-like domain is found at 957–1106 (NALPTEGKVF…EALLEAAANV (150 aa)). Residues 957 to 1106 (NALPTEGKVF…EALLEAAANV (150 aa)) form an allosteric domain region.

This sequence belongs to the CarB family. As to quaternary structure, composed of two chains; the small (or glutamine) chain promotes the hydrolysis of glutamine to ammonia, which is used by the large (or ammonia) chain to synthesize carbamoyl phosphate. Tetramer of heterodimers (alpha,beta)4. Requires Mg(2+) as cofactor. Mn(2+) serves as cofactor.

It carries out the reaction hydrogencarbonate + L-glutamine + 2 ATP + H2O = carbamoyl phosphate + L-glutamate + 2 ADP + phosphate + 2 H(+). The enzyme catalyses hydrogencarbonate + NH4(+) + 2 ATP = carbamoyl phosphate + 2 ADP + phosphate + 2 H(+). It functions in the pathway amino-acid biosynthesis; L-arginine biosynthesis; carbamoyl phosphate from bicarbonate: step 1/1. The protein operates within pyrimidine metabolism; UMP biosynthesis via de novo pathway; (S)-dihydroorotate from bicarbonate: step 1/3. Its function is as follows. Large subunit of the glutamine-dependent carbamoyl phosphate synthetase (CPSase). CPSase catalyzes the formation of carbamoyl phosphate from the ammonia moiety of glutamine, carbonate, and phosphate donated by ATP, constituting the first step of 2 biosynthetic pathways, one leading to arginine and/or urea and the other to pyrimidine nucleotides. The large subunit (synthetase) binds the substrates ammonia (free or transferred from glutamine from the small subunit), hydrogencarbonate and ATP and carries out an ATP-coupled ligase reaction, activating hydrogencarbonate by forming carboxy phosphate which reacts with ammonia to form carbamoyl phosphate. This chain is Carbamoyl phosphate synthase large chain, found in Renibacterium salmoninarum (strain ATCC 33209 / DSM 20767 / JCM 11484 / NBRC 15589 / NCIMB 2235).